Consider the following 66-residue polypeptide: UPF0337 protein pc0632 (66 aa).

It belongs to the UPF0337 (CsbD) family.

The sequence is that of UPF0337 protein pc0632 from Protochlamydia amoebophila (strain UWE25).